The following is a 1297-amino-acid chain: MAVPSLWPWGACLPVIFLSLGFGLDTVEVCPSLDIRSEVAELRQLENCSVVEGHLQILLMFTATGEDFRGLSFPRLTQVTDYLLLFRVYGLESLRDLFPNLAVIRGTRLFLGYALVIFEMPHLRDVALPALGAVLRGAVRVEKNQELCHLSTIDWGLLQPAPGANHIVGNKLGEECADVCPGVLGAAGEPCAKTTFSGHTDYRCWTSSHCQRVCPCPHGMACTARGECCHTECLGGCSQPEDPRACVACRHLYFQGACLWACPPGTYQYESWRCVTAERCASLHSVPGRASTFGIHQGSCLAQCPSGFTRNSSSIFCHKCEGLCPKECKVGTKTIDSIQAAQDLVGCTHVEGSLILNLRQGYNLEPQLQHSLGLVETITGFLKIKHSFALVSLGFFKNLKLIRGDAMVDGNYTLYVLDNQNLQQLGSWVAAGLTIPVGKIYFAFNPRLCLEHIYRLEEVTGTRGRQNKAEINPRTNGDRAACQTRTLRFVSNVTEADRILLRWERYEPLEARDLLSFIVYYKESPFQNATEHVGPDACGTQSWNLLDVELPLSRTQEPGVTLASLKPWTQYAVFVRAITLTTEEDSPHQGAQSPIVYLRTLPAAPTVPQDVISTSNSSSHLLVRWKPPTQRNGNLTYYLVLWQRLAEDGDLYLNDYCHRGLRLPTSNNDPRFDGEDGDPEAEMESDCCPCQHPPPGQVLPPLEAQEASFQKKFENFLHNAITIPISPWKVTSINKSPQRDSGRHRRAAGPLRLGGNSSDFEIQEDKVPRERAVLSGLRHFTEYRIDIHACNHAAHTVGCSAATFVFARTMPHREADGIPGKVAWEASSKNSVLLRWLEPPDPNGLILKYEIKYRRLGEEATVLCVSRLRYAKFGGVHLALLPPGNYSARVRATSLAGNGSWTDSVAFYILGPEEEDAGGLHVLLTATPVGLTLLIVLAALGFFYGKKRNRTLYASVNPEYFSASDMYVPDEWEVPREQISIIRELGQGSFGMVYEGLARGLEAGEESTPVALKTVNELASPRECIEFLKEASVMKAFKCHHVVRLLGVVSQGQPTLVIMELMTRGDLKSHLRSLRPEAENNPGLPQPALGEMIQMAGEIADGMAYLAANKFVHRDLAARNCMVSQDFTVKIGDFGMTRDVYETDYYRKGGKGLLPVRWMAPESLKDGIFTTHSDVWSFGVVLWEIVTLAEQPYQGLSNEQVLKFVMDGGVLEELEGCPLQLQELMSRCWQPNPRLRPSFTHILDSIQEELRPSFRLLSFYYSPECRGARGSLPTTDAEPDSSPTPRDCSPQNGGPGH.

Positions 1–26 are cleaved as a signal peptide; the sequence is MAVPSLWPWGACLPVIFLSLGFGLDT. The N-linked (GlcNAc...) asparagine glycan is linked to asparagine 47. 9 disulfide bridges follow: cysteine 214–cysteine 222, cysteine 216–cysteine 228, cysteine 229–cysteine 237, cysteine 233–cysteine 246, cysteine 249–cysteine 258, cysteine 262–cysteine 274, cysteine 280–cysteine 300, cysteine 304–cysteine 317, and cysteine 320–cysteine 324. Asparagine 311 carries an N-linked (GlcNAc...) asparagine glycan. 5 N-linked (GlcNAc...) asparagine glycosylation sites follow: asparagine 411, asparagine 492, asparagine 528, asparagine 616, and asparagine 634. 2 Fibronectin type-III domains span residues 483–603 and 607–707; these read QTRT…TLPA and VPQD…AQEA. Cysteine 657 and cysteine 864 are joined by a disulfide. Disordered regions lie at residues 666 to 687 and 732 to 758; these read SNND…ESDC and SINK…GNSS. Residues 675–685 show a composition bias toward acidic residues; it reads EDGDPEAEMES. Over 747 to 921 the chain is Extracellular; the sequence is AAGPLRLGGN…PEEEDAGGLH (175 aa). N-linked (GlcNAc...) asparagine glycosylation is found at asparagine 756, asparagine 885, and asparagine 898. The region spanning 818 to 913 is the Fibronectin type-III 3 domain; sequence IPGKVAWEAS…SVAFYILGPE (96 aa). The helical transmembrane segment at 922 to 943 threads the bilayer; sequence VLLTATPVGLTLLIVLAALGFF. Topologically, residues 944–1297 are cytoplasmic; sequence YGKKRNRTLY…CSPQNGGPGH (354 aa). The Protein kinase domain maps to 979–1254; sequence ISIIRELGQG…SIQEELRPSF (276 aa). Residues 985–993 and lysine 1013 each bind ATP; that span reads LGQGSFGMV. The Proton acceptor role is filled by aspartate 1115. Tyrosine 1145 and tyrosine 1146 each carry phosphotyrosine; by autocatalysis. The interval 1267–1297 is disordered; sequence GARGSLPTTDAEPDSSPTPRDCSPQNGGPGH. Polar residues predominate over residues 1281–1297; it reads SSPTPRDCSPQNGGPGH.

This sequence belongs to the protein kinase superfamily. Tyr protein kinase family. Insulin receptor subfamily. In terms of assembly, probable tetramer of 2 alpha and 2 beta chains linked by disulfide bonds. The alpha chains contribute to the formation of the ligand-binding domain, while the beta chains carry the kinase domain. Post-translationally, autophosphorylated on tyrosine residues between pH 7.9 and pH 10.5.

The protein resides in the membrane. The enzyme catalyses L-tyrosyl-[protein] + ATP = O-phospho-L-tyrosyl-[protein] + ADP + H(+). Its function is as follows. Receptor with tyrosine-protein kinase activity. Functions as a pH sensing receptor which is activated by increased extracellular pH. Activates an intracellular signaling pathway that involves IRS1 and AKT1/PKB. The polypeptide is Insulin receptor-related protein (INSRR) (Homo sapiens (Human)).